The primary structure comprises 330 residues: Ketol-acid reductoisomerase (NADP(+)) (330 aa).

One can recognise a KARI N-terminal Rossmann domain in the interval 1–181; it reads MKVFYDSDFK…GLSRAGVIQT (181 aa). Residues 24–27, Arg47, Ser52, and 82–85 each bind NADP(+); these read YGSQ and DELQ. The active site involves His107. Gly133 provides a ligand contact to NADP(+). In terms of domain architecture, KARI C-terminal knotted spans 182–327; it reads TFKEETETDL…AKLRKMCGLE (146 aa). Positions 190, 194, 226, and 230 each coordinate Mg(2+). Ser251 serves as a coordination point for substrate.

Belongs to the ketol-acid reductoisomerase family. Mg(2+) is required as a cofactor.

The catalysed reaction is (2R)-2,3-dihydroxy-3-methylbutanoate + NADP(+) = (2S)-2-acetolactate + NADPH + H(+). The enzyme catalyses (2R,3R)-2,3-dihydroxy-3-methylpentanoate + NADP(+) = (S)-2-ethyl-2-hydroxy-3-oxobutanoate + NADPH + H(+). The protein operates within amino-acid biosynthesis; L-isoleucine biosynthesis; L-isoleucine from 2-oxobutanoate: step 2/4. It participates in amino-acid biosynthesis; L-valine biosynthesis; L-valine from pyruvate: step 2/4. In terms of biological role, involved in the biosynthesis of branched-chain amino acids (BCAA). Catalyzes an alkyl-migration followed by a ketol-acid reduction of (S)-2-acetolactate (S2AL) to yield (R)-2,3-dihydroxy-isovalerate. In the isomerase reaction, S2AL is rearranged via a Mg-dependent methyl migration to produce 3-hydroxy-3-methyl-2-ketobutyrate (HMKB). In the reductase reaction, this 2-ketoacid undergoes a metal-dependent reduction by NADPH to yield (R)-2,3-dihydroxy-isovalerate. The protein is Ketol-acid reductoisomerase (NADP(+)) of Methanococcus maripaludis (strain C6 / ATCC BAA-1332).